Reading from the N-terminus, the 184-residue chain is Translocon-associated protein subunit beta (184 aa).

Residues 1 to 20 (MNFKTVISLFLVLFVSFVYC) form the signal peptide. Residues 21 to 147 (ENGAELLFHK…SQADYEKRTS (127 aa)) are Lumenal-facing. N-linked (GlcNAc...) asparagine glycosylation is present at Asn94. Residues 148 to 168 (LLIKEWITFFVLCAGAIALPY) traverse the membrane as a helical segment. Residues 169–184 (SISTYYKKNYENGIKK) are Cytoplasmic-facing.

This sequence belongs to the TRAP-beta family. As to quaternary structure, heterotrimer of TRAP-alpha, TRAP-beta and TRAP-gamma.

The protein localises to the endoplasmic reticulum membrane. Functionally, TRAP proteins are part of a complex whose function is to bind calcium to the ER membrane and thereby regulate the retention of ER resident proteins. The protein is Translocon-associated protein subunit beta (ssr2) of Dictyostelium discoideum (Social amoeba).